A 554-amino-acid chain; its full sequence is HMG box-containing protein 4 (554 aa).

2 disordered regions span residues 15–368 (GTED…AYQV) and 417–469 (HKQN…PAKV). Residues 75–88 (SSDDYHADHSTDSA) show a composition bias toward basic and acidic residues. Low complexity predominate over residues 95–105 (SLPSPSSSDTA). Residues 113-123 (TSPQADTSTTH) are compositionally biased toward polar residues. Basic and acidic residues-rich tracts occupy residues 145-154 (PHKDYHKKSG) and 217-226 (LGREEIESRS). Over residues 236–251 (YTPRSGGTPDSASSTG) the composition is skewed to polar residues. Residues 268–296 (MKKKKKSKKSKKKKDKHKDEKHKKHSKSK) show a composition bias toward basic residues. Positions 313–332 (LPSPPPPPATTPPTSPPSIP) are enriched in pro residues. Residues 341–357 (HTEEQSDKKKKKEDPEK) are compositionally biased toward basic and acidic residues. A DNA-binding region (HMG box) is located at residues 359-427 (KKKNMSAYQV…KQNKAEATTV (69 aa)). 2 stretches are compositionally biased toward low complexity: residues 433–445 (SSESAPKSKGSSS) and 454–467 (SPTSSVASFSTSPA).

Interacts with nlk.2.

It localises to the nucleus. In terms of biological role, negatively regulates Wnt/beta-catenin signaling during development. This chain is HMG box-containing protein 4 (hmgxb4), found in Xenopus laevis (African clawed frog).